The following is a 206-amino-acid chain: High frequency lysogenization protein HflD homolog (206 aa).

Belongs to the HflD family.

Its subcellular location is the cytoplasm. The protein resides in the cell inner membrane. This chain is High frequency lysogenization protein HflD homolog, found in Pseudomonas syringae pv. syringae (strain B728a).